The chain runs to 124 residues: Large ribosomal subunit protein bL17 (124 aa).

It belongs to the bacterial ribosomal protein bL17 family. Part of the 50S ribosomal subunit. Contacts protein L32.

This chain is Large ribosomal subunit protein bL17, found in Acidithiobacillus ferrooxidans (strain ATCC 23270 / DSM 14882 / CIP 104768 / NCIMB 8455) (Ferrobacillus ferrooxidans (strain ATCC 23270)).